The primary structure comprises 167 residues: MVALYCGGGLRPLMLSWSRDLPCIWRALHTSAVCFKNRAARVRVGKGNKPVTYEEAHAPHYIAHRKGWLSLHTGNLDGEDHAAERTVEDVFLRKFMLGTFPGCLADQLILKRRANQVEICALVLRQLPAHKFYFLVGYSETLLSHFYKCPVRLHLQTVPSKVVYKYI.

The transit peptide at 1–35 directs the protein to the mitochondrion; the sequence is MVALYCGGGLRPLMLSWSRDLPCIWRALHTSAVCF.

The protein belongs to the universal ribosomal protein uS3 family. Component of the mitochondrial ribosome small subunit (28S) which comprises a 12S rRNA and about 30 distinct proteins.

It is found in the mitochondrion. This is Small ribosomal subunit protein uS3m (MRPS24) from Bos taurus (Bovine).